The primary structure comprises 122 residues: uncharacterized protein (122 aa).

This is an uncharacterized protein from Bacillus subtilis (strain 168).